A 1040-amino-acid chain; its full sequence is Contactin-2 (1040 aa).

Residues methionine 1 to alanine 30 form the signal peptide. 6 Ig-like C2-type domains span residues proline 39 to arginine 130, glutamine 135 to serine 224, proline 241 to isoleucine 324, proline 329 to alanine 413, proline 419 to serine 506, and threonine 511 to leucine 605. Cystine bridges form between cysteine 63–cysteine 113, cysteine 157–cysteine 209, cysteine 263–cysteine 308, and cysteine 350–cysteine 397. 3 N-linked (GlcNAc...) asparagine glycosylation sites follow: asparagine 78, asparagine 200, and asparagine 206. N-linked (GlcNAc...) asparagine glycosylation is found at asparagine 463, asparagine 479, asparagine 500, and asparagine 527. 4 Fibronectin type-III domains span residues proline 612 to alanine 710, alanine 715 to glutamate 812, alanine 817 to proline 913, and proline 917 to threonine 1008. N-linked (GlcNAc...) asparagine glycosylation occurs at asparagine 777. The short motif at arginine 796–aspartate 798 is the Cell attachment site element. 3 N-linked (GlcNAc...) asparagine glycosylation sites follow: asparagine 832, asparagine 920, and asparagine 942. The segment at arginine 895–isoleucine 921 is disordered. Alanine 1015 carries the GPI-anchor amidated alanine lipid modification. Residues alanine 1016–leucine 1040 constitute a propeptide, removed in mature form.

The protein belongs to the immunoglobulin superfamily. Contactin family. In terms of tissue distribution, in neural tissues in embryos, and in adult brain, spinal cord and cerebellum.

Its subcellular location is the cell membrane. In terms of biological role, may play a role in the initial growth and guidance of axons. May be involved in cell adhesion. In conjunction with another transmembrane protein, CNTNAP2, contributes to the organization of axonal domains at nodes of Ranvier by maintaining voltage-gated potassium channels at the juxtaparanodal region. This Rattus norvegicus (Rat) protein is Contactin-2 (Cntn2).